Here is a 188-residue protein sequence, read N- to C-terminus: Quinone reductase (188 aa).

Residues 13–20 (SLRKGSFN), 82–85 (EYNY), and Ser-117 each bind FMN.

It belongs to the SsuE family. As to quaternary structure, homotetramer. Dimer of dimers. The tetrameric configuration has a central role in chromate reductase activity. The cofactor is FMN.

It catalyses the reaction a quinone + NADH + H(+) = a quinol + NAD(+). It carries out the reaction a quinone + NADPH + H(+) = a quinol + NADP(+). The enzyme catalyses Cr(6+) + 2 NADH + O2 = Cr(3+) + superoxide + 2 NAD(+) + 2 H(+). The catalysed reaction is Cr(6+) + 2 NADPH + O2 = Cr(3+) + superoxide + 2 NADP(+) + 2 H(+). Catalyzes the reduction of quinones. Acts by simultaneous two-electron transfer, avoiding formation of highly reactive semiquinone intermediates and producing quinols that promote tolerance of H(2)O(2). Quinone reduction is probably the primary biological role of ChrR. Can also reduce toxic chromate to insoluble and less toxic Cr(3+). Catalyzes the transfer of three electrons to Cr(6+) producing Cr(3+) and one electron to molecular oxygen without producing the toxic Cr(5+) species and only producing a minimal amount of reactive oxygen species (ROS). Chromate reduction protects the cell against chromate toxicity, but is likely a secondary activity. In Escherichia coli O157:H7, this protein is Quinone reductase (chrR).